A 154-amino-acid polypeptide reads, in one-letter code: Endoribonuclease YbeY (154 aa).

3 residues coordinate Zn(2+): His118, His122, and His128.

This sequence belongs to the endoribonuclease YbeY family. Requires Zn(2+) as cofactor.

The protein localises to the cytoplasm. Single strand-specific metallo-endoribonuclease involved in late-stage 70S ribosome quality control and in maturation of the 3' terminus of the 16S rRNA. This is Endoribonuclease YbeY from Chloroflexus aurantiacus (strain ATCC 29366 / DSM 635 / J-10-fl).